The chain runs to 381 residues: Succinate--CoA ligase [ADP-forming] subunit beta (381 aa).

An ATP-grasp domain is found at 9–236 (KTIFADAGIP…ESYEDDLERK (228 aa)). ATP is bound by residues Lys-45, 52 to 54 (GRG), Glu-91, Val-94, and Glu-99. The Mg(2+) site is built by Asn-191 and Asp-205. Substrate is bound by residues Asn-256 and 313–315 (GIT).

This sequence belongs to the succinate/malate CoA ligase beta subunit family. In terms of assembly, heterotetramer of two alpha and two beta subunits. It depends on Mg(2+) as a cofactor.

It catalyses the reaction succinate + ATP + CoA = succinyl-CoA + ADP + phosphate. The catalysed reaction is GTP + succinate + CoA = succinyl-CoA + GDP + phosphate. The protein operates within carbohydrate metabolism; tricarboxylic acid cycle; succinate from succinyl-CoA (ligase route): step 1/1. In terms of biological role, succinyl-CoA synthetase functions in the citric acid cycle (TCA), coupling the hydrolysis of succinyl-CoA to the synthesis of either ATP or GTP and thus represents the only step of substrate-level phosphorylation in the TCA. The beta subunit provides nucleotide specificity of the enzyme and binds the substrate succinate, while the binding sites for coenzyme A and phosphate are found in the alpha subunit. The sequence is that of Succinate--CoA ligase [ADP-forming] subunit beta from Halorubrum lacusprofundi (strain ATCC 49239 / DSM 5036 / JCM 8891 / ACAM 34).